The sequence spans 742 residues: Polyribonucleotide nucleotidyltransferase (742 aa).

Mg(2+)-binding residues include Asp-515 and Asp-521. Positions Pro-581–Val-640 constitute a KH domain. In terms of domain architecture, S1 motif spans Gly-652–Val-724.

Belongs to the polyribonucleotide nucleotidyltransferase family. It depends on Mg(2+) as a cofactor.

It localises to the cytoplasm. It catalyses the reaction RNA(n+1) + phosphate = RNA(n) + a ribonucleoside 5'-diphosphate. Involved in mRNA degradation. Catalyzes the phosphorolysis of single-stranded polyribonucleotides processively in the 3'- to 5'-direction. This is Polyribonucleotide nucleotidyltransferase from Nocardioides sp. (strain ATCC BAA-499 / JS614).